A 195-amino-acid polypeptide reads, in one-letter code: Peptidyl-tRNA hydrolase (195 aa).

Tyrosine 17 is a binding site for tRNA. Histidine 22 functions as the Proton acceptor in the catalytic mechanism. Positions 68, 70, and 116 each coordinate tRNA.

The protein belongs to the PTH family. As to quaternary structure, monomer.

It is found in the cytoplasm. It carries out the reaction an N-acyl-L-alpha-aminoacyl-tRNA + H2O = an N-acyl-L-amino acid + a tRNA + H(+). In terms of biological role, hydrolyzes ribosome-free peptidyl-tRNAs (with 1 or more amino acids incorporated), which drop off the ribosome during protein synthesis, or as a result of ribosome stalling. Functionally, catalyzes the release of premature peptidyl moieties from peptidyl-tRNA molecules trapped in stalled 50S ribosomal subunits, and thus maintains levels of free tRNAs and 50S ribosomes. This is Peptidyl-tRNA hydrolase from Erwinia tasmaniensis (strain DSM 17950 / CFBP 7177 / CIP 109463 / NCPPB 4357 / Et1/99).